The primary structure comprises 273 residues: Small ribosomal subunit protein uS2 (273 aa).

The protein belongs to the universal ribosomal protein uS2 family.

This is Small ribosomal subunit protein uS2 from Mycolicibacterium vanbaalenii (strain DSM 7251 / JCM 13017 / BCRC 16820 / KCTC 9966 / NRRL B-24157 / PYR-1) (Mycobacterium vanbaalenii).